The following is a 493-amino-acid chain: 1-aminocyclopropane-1-carboxylate synthase 1 (493 aa).

Lysine 279 is modified (N6-(pyridoxal phosphate)lysine).

Belongs to the class-I pyridoxal-phosphate-dependent aminotransferase family. Homodimer. Pyridoxal 5'-phosphate is required as a cofactor.

It carries out the reaction S-adenosyl-L-methionine = 1-aminocyclopropane-1-carboxylate + S-methyl-5'-thioadenosine + H(+). The protein operates within alkene biosynthesis; ethylene biosynthesis via S-adenosyl-L-methionine; ethylene from S-adenosyl-L-methionine: step 1/2. Catalyzes the formation of 1-aminocyclopropane-1-carboxylate, a direct precursor of ethylene in higher plants. In Cucurbita pepo (Vegetable marrow), this protein is 1-aminocyclopropane-1-carboxylate synthase 1 (ACC1A).